We begin with the raw amino-acid sequence, 393 residues long: Acetylornithine aminotransferase (393 aa).

Residues 102–103 (GA) and F136 contribute to the pyridoxal 5'-phosphate site. R139 contacts N(2)-acetyl-L-ornithine. Residue 219–222 (DEVQ) coordinates pyridoxal 5'-phosphate. At K248 the chain carries N6-(pyridoxal phosphate)lysine. S274 lines the N(2)-acetyl-L-ornithine pocket. T275 provides a ligand contact to pyridoxal 5'-phosphate.

Belongs to the class-III pyridoxal-phosphate-dependent aminotransferase family. ArgD subfamily. In terms of assembly, homodimer. It depends on pyridoxal 5'-phosphate as a cofactor.

The protein resides in the cytoplasm. The catalysed reaction is N(2)-acetyl-L-ornithine + 2-oxoglutarate = N-acetyl-L-glutamate 5-semialdehyde + L-glutamate. It participates in amino-acid biosynthesis; L-arginine biosynthesis; N(2)-acetyl-L-ornithine from L-glutamate: step 4/4. The polypeptide is Acetylornithine aminotransferase (Wolinella succinogenes (strain ATCC 29543 / DSM 1740 / CCUG 13145 / JCM 31913 / LMG 7466 / NCTC 11488 / FDC 602W) (Vibrio succinogenes)).